Here is a 389-residue protein sequence, read N- to C-terminus: Ecto-ADP-ribosyltransferase 3 (389 aa).

An N-terminal signal peptide occupies residues 1 to 26 (MKTGHFEIVTMLLATMILVDIFQVKA). Cysteine 43 and cysteine 256 form a disulfide bridge. In terms of domain architecture, TR mART core spans 64–251 (QQLDTVWENA…LILQSINKTC (188 aa)). NAD(+) is bound by residues tyrosine 101 and arginine 163. Asparagine 248 is a glycosylation site (N-linked (GlcNAc...) asparagine). 3 tandem repeats follow at residues 283–292 (GEKNQKLEDH), 293–302 (SEKNWKLEDH), and 303–312 (GEKNQKLEDH). A 3 X 10 AA tandem repeats of [GS]-E-K-N-[QW]-K-L-E-D-H region spans residues 283 to 312 (GEKNQKLEDHSEKNWKLEDHGEKNQKLEDH). The segment at 325–362 (MKIPEPFPLPEDKSQGNINNPTPGPVPVPGPKSHPSAS) is disordered. Threonine 346 is a glycosylation site (O-linked (GalNAc...) threonine). Residues 346 to 356 (TPGPVPVPGPK) are compositionally biased toward pro residues. Serine 362 carries the GPI-anchor amidated serine lipid modification. The propeptide at 363 to 389 (SGKLLLPQFGMVIILISVSAINLFVAL) is removed in mature form.

This sequence belongs to the Arg-specific ADP-ribosyltransferase family. Post-translationally, O-glycosylated with core 1 or possibly core 8 glycans. Testis specific.

It localises to the cell membrane. The catalysed reaction is L-arginyl-[protein] + NAD(+) = N(omega)-(ADP-D-ribosyl)-L-arginyl-[protein] + nicotinamide + H(+). The polypeptide is Ecto-ADP-ribosyltransferase 3 (ART3) (Homo sapiens (Human)).